Reading from the N-terminus, the 427-residue chain is Trigger factor (427 aa).

Residues 163 to 248 (GDTVILDFEG…LHEIKTKEVP (86 aa)) enclose the PPIase FKBP-type domain.

Belongs to the FKBP-type PPIase family. Tig subfamily.

It localises to the cytoplasm. It catalyses the reaction [protein]-peptidylproline (omega=180) = [protein]-peptidylproline (omega=0). Functionally, involved in protein export. Acts as a chaperone by maintaining the newly synthesized protein in an open conformation. Functions as a peptidyl-prolyl cis-trans isomerase. This chain is Trigger factor, found in Listeria welshimeri serovar 6b (strain ATCC 35897 / DSM 20650 / CCUG 15529 / CIP 8149 / NCTC 11857 / SLCC 5334 / V8).